Consider the following 337-residue polypeptide: Viral cathepsin (337 aa).

Residues 1-18 (MYLIYYYTIIAVATASIA) form the signal peptide. Positions 19–126 (NEKIFYDIDS…VTVAGPSART (108 aa)) are cleaved as a propeptide — activation peptide. Disulfide bonds link Cys-147-Cys-188, Cys-181-Cys-221, and Cys-276-Cys-324. Residue Cys-150 is part of the active site. Active-site residues include His-283 and Asn-303.

The protein belongs to the peptidase C1 family. Post-translationally, synthesized as an inactive proenzyme and activated by proteolytic removal of the inhibitory propeptide.

The catalysed reaction is Endopeptidase of broad specificity, hydrolyzing substrates of both cathepsin L and cathepsin B.. Functionally, cysteine protease that plays an essential role in host liquefaction to facilitate horizontal transmission of the virus. May participate in the degradation of foreign protein expressed by the baculovirus system. The polypeptide is Viral cathepsin (VCATH) (Spodoptera litura multicapsid nucleopolyhedrovirus (SpltMNPV)).